We begin with the raw amino-acid sequence, 103 residues long: Large ribosomal subunit protein bL21 (103 aa).

Belongs to the bacterial ribosomal protein bL21 family. In terms of assembly, part of the 50S ribosomal subunit. Contacts protein L20.

Its function is as follows. This protein binds to 23S rRNA in the presence of protein L20. The protein is Large ribosomal subunit protein bL21 of Brevibacillus brevis (strain 47 / JCM 6285 / NBRC 100599).